Here is a 316-residue protein sequence, read N- to C-terminus: Pantothenate kinase (316 aa).

95-102 (GSVAVGKS) lines the ATP pocket.

The protein belongs to the prokaryotic pantothenate kinase family.

Its subcellular location is the cytoplasm. The enzyme catalyses (R)-pantothenate + ATP = (R)-4'-phosphopantothenate + ADP + H(+). Its pathway is cofactor biosynthesis; coenzyme A biosynthesis; CoA from (R)-pantothenate: step 1/5. The sequence is that of Pantothenate kinase from Shewanella sp. (strain MR-4).